We begin with the raw amino-acid sequence, 251 residues long: Fibroblast growth factor 23 (251 aa).

The first 24 residues, 1 to 24 (MLGACLRLLVGALCTVCSLGTARA), serve as a signal peptide directing secretion. A disulfide bond links C95 and C113. O-linked (GalNAc) threonine glycans are attached at residues T171 and T178. The interval 175-251 (RRHTRSAEDP…DRCRPFPRFV (77 aa)) is disordered. Residues 179-189 (RSAEDPPERDP) are compositionally biased toward basic and acidic residues. S180 is modified (phosphoserine; by FAM20C).

The protein belongs to the heparin-binding growth factors family. Interacts with FGFR1, FGFR2, FGFR3 and FGFR4. Affinity between fibroblast growth factors (FGFs) and their receptors is increased by KL and heparan sulfate glycosaminoglycans that function as coreceptors. In terms of processing, following secretion this protein is inactivated by cleavage into a N-terminal fragment and a C-terminal fragment. The processing is effected by proprotein convertases. O-glycosylated at Thr-171 and Thr-178 by GALNT3 and glycosylation of Thr-178 requires previous glycosylation at Thr171. Glycosylation is necessary for secretion; it blocks processing by proprotein convertases when the O-glycan is alpha 2,6-sialylated. Competition between proprotein convertase cleavage and block of cleavage by O-glycosylation determines the level of secreted active FGF23. Post-translationally, phosphorylation at Ser-180 mediated by FAM20C slows down glycosylation at Thr-178 notably. In terms of tissue distribution, expressed in the parathyroid.

The protein localises to the secreted. Functionally, regulator of phosphate homeostasis. Inhibits renal tubular phosphate transport by reducing SLC34A1 levels. Regulator of vitamin-D metabolism. Negatively regulates osteoblasts differentiation and matrix mineralization. Acts directly on the parathyroid to decrease PTH secretion. Up-regulates EGR1 expression in the presence of KL. The polypeptide is Fibroblast growth factor 23 (Fgf23) (Rattus norvegicus (Rat)).